The chain runs to 206 residues: Protein GrpE (206 aa).

Belongs to the GrpE family. Homodimer.

Its subcellular location is the cytoplasm. In terms of biological role, participates actively in the response to hyperosmotic and heat shock by preventing the aggregation of stress-denatured proteins, in association with DnaK and GrpE. It is the nucleotide exchange factor for DnaK and may function as a thermosensor. Unfolded proteins bind initially to DnaJ; upon interaction with the DnaJ-bound protein, DnaK hydrolyzes its bound ATP, resulting in the formation of a stable complex. GrpE releases ADP from DnaK; ATP binding to DnaK triggers the release of the substrate protein, thus completing the reaction cycle. Several rounds of ATP-dependent interactions between DnaJ, DnaK and GrpE are required for fully efficient folding. This is Protein GrpE from Shewanella sp. (strain W3-18-1).